A 394-amino-acid polypeptide reads, in one-letter code: Putative agmatinase 1 (394 aa).

An N-terminal signal peptide occupies residues 1-20 (MALQSLFLILLAGAAQLAQA). 6 residues coordinate Mn(2+): histidine 186, aspartate 209, histidine 211, aspartate 213, aspartate 307, and aspartate 309.

Belongs to the arginase family. Mn(2+) is required as a cofactor.

The enzyme catalyses agmatine + H2O = urea + putrescine. This is Putative agmatinase 1 from Schizosaccharomyces pombe (strain 972 / ATCC 24843) (Fission yeast).